The primary structure comprises 486 residues: Stretch-activated cation channel yam8 (486 aa).

The first 24 residues, 1–24 (MFFFSTHLILKILFFWSITRNIFG), serve as a signal peptide directing secretion. At 25–464 (ATYTSLLLNN…PGVEFYESGS (440 aa)) the chain is on the extracellular side. Residues asparagine 33, asparagine 49, asparagine 59, asparagine 82, and asparagine 93 are each glycosylated (N-linked (GlcNAc...) asparagine). The chain crosses the membrane as a helical span at residues 465–485 (ALLNISWRTFFISLIFWILFV). Residue glutamate 486 is a topological domain, cytoplasmic.

It is found in the cell membrane. In terms of biological role, calcium-permeable, cation-selective stretch-activated channel (SAC) that functions together with CCH1 to mediate calcium entry into cells. Required during mating. The polypeptide is Stretch-activated cation channel yam8 (Schizosaccharomyces pombe (strain 972 / ATCC 24843) (Fission yeast)).